A 516-amino-acid chain; its full sequence is Adenosine deaminase (516 aa).

A signal peptide spans 1–20 (MFPRLIVWLLAASAVHAVLD).

This sequence belongs to the metallo-dependent hydrolases superfamily. Adenosine and AMP deaminases family. ADGF subfamily. Zn(2+) is required as a cofactor. As to expression, salivary gland (at protein level).

The protein localises to the secreted. The catalysed reaction is adenosine + H2O + H(+) = inosine + NH4(+). In terms of biological role, catalyzes the deamination of adenosine to inosine. This Phlebotomus duboscqi (Sandfly) protein is Adenosine deaminase.